We begin with the raw amino-acid sequence, 434 residues long: Salicylate hydroxylase (434 aa).

9 to 38 (RIGIVGGGISGVALALELCRYSHIQVQLFE) is an FAD binding site.

In terms of assembly, monomer. It depends on FAD as a cofactor.

The enzyme catalyses salicylate + NADH + O2 + 2 H(+) = catechol + CO2 + NAD(+) + H2O. It functions in the pathway aromatic compound metabolism; naphthalene degradation. The polypeptide is Salicylate hydroxylase (nahG) (Pseudomonas putida (Arthrobacter siderocapsulatus)).